The sequence spans 638 residues: ATP-dependent zinc metalloprotease FtsH (638 aa).

Over 1-15 (MDNNHKGPNDPNSKK) the chain is Cytoplasmic. Residues 16 to 36 (PLLQNPLLLIAIFGIIIFVAM) traverse the membrane as a helical segment. At 37–122 (RVMNSDEGFG…INYSGFSESN (86 aa)) the chain is on the periplasmic side. A helical membrane pass occupies residues 123 to 143 (FFADILGWLLPVLVILGLWMF). Topologically, residues 144-638 (MASRMQKNMG…RLVPLEEHAS (495 aa)) are cytoplasmic. ATP is bound at residue 216-223 (GPPGTGKT). His440 is a binding site for Zn(2+). Glu441 is a catalytic residue. Residues His444 and Asp517 each coordinate Zn(2+).

The protein in the central section; belongs to the AAA ATPase family. This sequence in the C-terminal section; belongs to the peptidase M41 family. As to quaternary structure, homohexamer. Requires Zn(2+) as cofactor.

The protein resides in the cell inner membrane. Acts as a processive, ATP-dependent zinc metallopeptidase for both cytoplasmic and membrane proteins. Plays a role in the quality control of integral membrane proteins. This is ATP-dependent zinc metalloprotease FtsH from Helicobacter felis (strain ATCC 49179 / CCUG 28539 / NCTC 12436 / CS1).